A 142-amino-acid polypeptide reads, in one-letter code: 3-hydroxyacyl-[acyl-carrier-protein] dehydratase FabZ (142 aa).

His48 is an active-site residue.

Belongs to the thioester dehydratase family. FabZ subfamily.

The protein resides in the cytoplasm. It carries out the reaction a (3R)-hydroxyacyl-[ACP] = a (2E)-enoyl-[ACP] + H2O. Involved in unsaturated fatty acids biosynthesis. Catalyzes the dehydration of short chain beta-hydroxyacyl-ACPs and long chain saturated and unsaturated beta-hydroxyacyl-ACPs. In Prochlorococcus marinus (strain MIT 9313), this protein is 3-hydroxyacyl-[acyl-carrier-protein] dehydratase FabZ.